Here is a 362-residue protein sequence, read N- to C-terminus: MADQRKAALDVAIRKIEKNFGKGSIMRMGDATDMKVASVSSGSLAIDKALGIGGYPRGRIVEIYGPESSGKTTVALHAVAEVQRQGGTAAYIDAENALDPQYAEALGVNIDDLLLSQPDSGEEGLEIADALISSGAVDLVIVDSVAALVPRAEIDGDMGDTHVGLQARLMSQALRKLSGEINKTKTIAIFINQIREKVGVMFGNPETTTGGRALKFYSTIRMEIRRAEQIKNGTDVIGNKAKVKIVKNKVAPPFKRCEVDIMYGEGISKTGELLDMAVENDLVDKSGAWYSYGSERIGQGRENAKKWLKEHPDSMNELMDKVRVANGMEPLNEKSTKETADDKASGKTGENKQETIEEASKE.

65 to 72 (GPESSGKT) is a binding site for ATP. The interval 323–362 (RVANGMEPLNEKSTKETADDKASGKTGENKQETIEEASKE) is disordered. The segment covering 331-362 (LNEKSTKETADDKASGKTGENKQETIEEASKE) has biased composition (basic and acidic residues).

Belongs to the RecA family.

It localises to the cytoplasm. Its function is as follows. Can catalyze the hydrolysis of ATP in the presence of single-stranded DNA, the ATP-dependent uptake of single-stranded DNA by duplex DNA, and the ATP-dependent hybridization of homologous single-stranded DNAs. It interacts with LexA causing its activation and leading to its autocatalytic cleavage. The protein is Protein RecA of Limosilactobacillus reuteri (strain DSM 20016) (Lactobacillus reuteri).